Here is a 507-residue protein sequence, read N- to C-terminus: Capsid vertex component 1 (507 aa).

The segment at 219–257 (AAAETSVSKHHPALENPSNIRGSAGGEGGGGRAGTGGTV) is disordered. Positions 241–257 (SAGGEGGGGRAGTGGTV) are enriched in gly residues.

It belongs to the herpesviridae CVC1 protein family. Interacts (via C-terminus) with capsid vertex component 2/CVC2.

Its subcellular location is the virion. The protein resides in the host nucleus. Capsid vertex-specific component that plays a role during viral DNA encapsidation, assuring correct genome cleavage and presumably stabilizing capsids that contain full-length viral genomes. The polypeptide is Capsid vertex component 1 (Epstein-Barr virus (strain B95-8) (HHV-4)).